We begin with the raw amino-acid sequence, 359 residues long: Tyrosine-protein phosphatase non-receptor type 7 (359 aa).

Positions 1–33 (MVQACEGRSRAQLPTLSLGADMTQPPPTKAPAK) are disordered. Positions 38-51 (LQERRGSSVALMLD) are interaction with MAP kinases. The residue at position 44 (serine 44) is a Phosphoserine. The residue at position 66 (threonine 66) is a Phosphothreonine. A phosphoserine mark is found at serine 93 and serine 143. One can recognise a Tyrosine-protein phosphatase domain in the interval 97–349 (LEEEFLKIPS…QFLHHTLALY (253 aa)). Substrate contacts are provided by residues aspartate 257, 290-296 (CSAGIGR), and glutamine 334. Catalysis depends on cysteine 290, which acts as the Phosphocysteine intermediate. Cysteine 290 carries the post-translational modification Cysteine sulfenic acid (-SOH).

This sequence belongs to the protein-tyrosine phosphatase family. Non-receptor class subfamily. Oxidized at active site cysteine. Treatment with pervanadate (vanadate and H(2)O(2)) or with antigen enhanced oxidation of active site cysteine. As to expression, expressed in bone marrow-derived mast cells.

The protein resides in the cytoplasm. It localises to the cytoskeleton. It catalyses the reaction O-phospho-L-tyrosyl-[protein] + H2O = L-tyrosyl-[protein] + phosphate. Its activity is regulated as follows. Inhibited upon FCER1A triggering. Functionally, may play a role in the regulation of T and B-lymphocyte development and signal transduction. In Mus musculus (Mouse), this protein is Tyrosine-protein phosphatase non-receptor type 7 (Ptpn7).